The sequence spans 101 residues: Small ribosomal subunit protein uS14 (101 aa).

It belongs to the universal ribosomal protein uS14 family. As to quaternary structure, part of the 30S ribosomal subunit. Contacts proteins S3 and S10.

In terms of biological role, binds 16S rRNA, required for the assembly of 30S particles and may also be responsible for determining the conformation of the 16S rRNA at the A site. This Actinobacillus pleuropneumoniae serotype 3 (strain JL03) protein is Small ribosomal subunit protein uS14.